A 182-amino-acid polypeptide reads, in one-letter code: Adenine phosphoribosyltransferase (182 aa).

The protein belongs to the purine/pyrimidine phosphoribosyltransferase family. Homodimer.

It localises to the cytoplasm. It carries out the reaction AMP + diphosphate = 5-phospho-alpha-D-ribose 1-diphosphate + adenine. Its pathway is purine metabolism; AMP biosynthesis via salvage pathway; AMP from adenine: step 1/1. In terms of biological role, catalyzes a salvage reaction resulting in the formation of AMP, that is energically less costly than de novo synthesis. The protein is Adenine phosphoribosyltransferase of Pseudomonas fluorescens (strain Pf0-1).